A 385-amino-acid polypeptide reads, in one-letter code: Prostacyclin receptor (385 aa).

At 1–16 the chain is on the extracellular side; sequence MADSCRNLTYVRDSVG. 2 cysteine pairs are disulfide-bonded: Cys5/Cys165 and Cys92/Cys170. A glycan (N-linked (GlcNAc...) asparagine) is linked at Asn7. A helical transmembrane segment spans residues 17-38; the sequence is PATSTLMFVAGVVGNGLALGIL. At 39–51 the chain is on the cytoplasmic side; it reads GARRHSRPSAFAV. The helical transmembrane segment at 52–76 threads the bilayer; it reads LVTGLGVTDLLGTCFLSPAVFAAYA. The Extracellular portion of the chain corresponds to 77-94; the sequence is RNSSLLGLARGRPALCDA. The helical transmembrane segment at 95-115 threads the bilayer; that stretch reads FAFAMTFFGLASTLILFAMAV. Residues 116 to 134 lie on the Cytoplasmic side of the membrane; it reads ERCLALSHPYLYAQLDGPR. Residues 135-158 form a helical membrane-spanning segment; that stretch reads RARLALPAIYAFCTIFCSLPFLGL. Residues 159–181 lie on the Extracellular side of the membrane; the sequence is GQHQQYCPGSWCFIRMRSAEPGG. Residues 182–208 traverse the membrane as a helical segment; it reads CAFLLAYASLVALLVAAIVLCNGSVTL. At 209–234 the chain is on the cytoplasmic side; the sequence is SLCRMYRQQRRHQARCPRPRAGEDEV. The helical transmembrane segment at 235-259 threads the bilayer; sequence DHLILLALMTGIMAVCSLPLTPQIR. The Extracellular segment spans residues 260–273; the sequence is GFTQAIAPDSSEMG. A helical membrane pass occupies residues 274-294; sequence DLLAFRFNAFNPILDPWVFIL. The Cytoplasmic segment spans residues 295 to 385; the sequence is FRKSVFQRLK…AGSEAACSLC (91 aa). Positions 315 to 344 are disordered; that stretch reads AQGDSRTSLSQSASGRKDSSAPPALEGKKG. Residues 318–328 show a composition bias toward polar residues; that stretch reads DSRTSLSQSAS. The residue at position 382 (Cys382) is a Cysteine methyl ester. Residue Cys382 is the site of S-farnesyl cysteine attachment. Residues 383–385 constitute a propeptide, removed in mature form; the sequence is SLC.

The protein belongs to the G-protein coupled receptor 1 family. In terms of assembly, interacts (non-isoprenylated C-terminus) with PDZK1. Post-translationally, isoprenylation does not influence ligand binding but is required for efficient coupling to the effectors adenylyl cyclase and phospholipase C.

It is found in the cell membrane. Its function is as follows. Receptor for prostacyclin (prostaglandin I2 or PGI2). The activity of this receptor is mediated by G(s) proteins which activate adenylate cyclase. The protein is Prostacyclin receptor (PTGIR) of Bos taurus (Bovine).